A 194-amino-acid polypeptide reads, in one-letter code: Ribonuclease VapC1 (194 aa).

Positions 34–134 (YVIDTSAIIS…TDDYSIQNVA (101 aa)) constitute a PINc domain. Mg(2+) contacts are provided by Asp37 and Asp150.

Belongs to the PINc/VapC protein family. Mg(2+) is required as a cofactor.

Toxic component of a type II toxin-antitoxin (TA) system. An RNase. This is Ribonuclease VapC1 from Thermoplasma acidophilum (strain ATCC 25905 / DSM 1728 / JCM 9062 / NBRC 15155 / AMRC-C165).